The sequence spans 148 residues: Small ribosomal subunit protein eS6 (148 aa).

The protein belongs to the eukaryotic ribosomal protein eS6 family.

In Pyrobaculum islandicum (strain DSM 4184 / JCM 9189 / GEO3), this protein is Small ribosomal subunit protein eS6.